The following is a 379-amino-acid chain: Dual-specificity RNA methyltransferase RlmN (379 aa).

The active-site Proton acceptor is Glu-90. Residues 96-348 (EPNRGTLCVS…TTVRKTRGDD (253 aa)) enclose the Radical SAM core domain. Cys-103 and Cys-353 are joined by a disulfide. [4Fe-4S] cluster-binding residues include Cys-110, Cys-114, and Cys-117. S-adenosyl-L-methionine is bound by residues 179-180 (GE), Ser-211, 233-235 (SLH), and Asn-310. The active-site S-methylcysteine intermediate is the Cys-353.

This sequence belongs to the radical SAM superfamily. RlmN family. The cofactor is [4Fe-4S] cluster.

It is found in the cytoplasm. It catalyses the reaction adenosine(2503) in 23S rRNA + 2 reduced [2Fe-2S]-[ferredoxin] + 2 S-adenosyl-L-methionine = 2-methyladenosine(2503) in 23S rRNA + 5'-deoxyadenosine + L-methionine + 2 oxidized [2Fe-2S]-[ferredoxin] + S-adenosyl-L-homocysteine. It carries out the reaction adenosine(37) in tRNA + 2 reduced [2Fe-2S]-[ferredoxin] + 2 S-adenosyl-L-methionine = 2-methyladenosine(37) in tRNA + 5'-deoxyadenosine + L-methionine + 2 oxidized [2Fe-2S]-[ferredoxin] + S-adenosyl-L-homocysteine. Functionally, specifically methylates position 2 of adenine 2503 in 23S rRNA and position 2 of adenine 37 in tRNAs. m2A2503 modification seems to play a crucial role in the proofreading step occurring at the peptidyl transferase center and thus would serve to optimize ribosomal fidelity. The sequence is that of Dual-specificity RNA methyltransferase RlmN from Nitrosomonas eutropha (strain DSM 101675 / C91 / Nm57).